The primary structure comprises 345 residues: Inositol phosphoceramide mannosyltransferase 2 (345 aa).

The chain crosses the membrane as a helical span at residues 4 to 24; that stretch reads VIYKFAVFAAVNFFLMSSIVL. N-linked (GlcNAc...) asparagine glycosylation is present at N55. Residues 220–240 form a helical membrane-spanning segment; that stretch reads YWLPYLTIMLSTGPLSISFLW. A glycan (N-linked (GlcNAc...) asparagine) is linked at N269. A helical membrane pass occupies residues 296–316; the sequence is LAYVIVAGFCLYFILSYMFFS.

This sequence belongs to the glycosyltransferase 32 family.

Its subcellular location is the golgi apparatus. It is found in the cis-Golgi network membrane. The protein localises to the trans-Golgi network membrane. Functionally, with imt1 and imt3, is required for the synthesis of mannosyl phosphorylinositol ceramide (MIPC). Catalyzes the addition of mannosyl to phosphorylinositol ceramide (IPC). MIPC is essential for cell morphology, cell-surface distribution of ergosterol, localization for plasma-membrane transporters, and lipid-raft-mediated endocytosis of plasma membrane proteins to the vacuole. The polypeptide is Inositol phosphoceramide mannosyltransferase 2 (Schizosaccharomyces pombe (strain 972 / ATCC 24843) (Fission yeast)).